A 334-amino-acid polypeptide reads, in one-letter code: Isocitrate/homoisocitrate dehydrogenase (334 aa).

70 to 72 lines the NADH pocket; it reads ATS. Residues serine 72, arginine 85, arginine 88, arginine 98, arginine 118, tyrosine 125, lysine 171, and asparagine 173 each coordinate (2R,3S)-homoisocitrate. Asparagine 173 is an NADH binding site. 3 residues coordinate Mg(2+): aspartate 204, aspartate 228, and aspartate 232. Residues 261-265 and asparagine 273 each bind NADH; that span reads GSAPD.

The protein belongs to the isocitrate and isopropylmalate dehydrogenases family. As to quaternary structure, homotetramer. Dimer of dimers. The homotetramer can transiently dissociate into homodimers. Mg(2+) serves as cofactor.

It catalyses the reaction (2R,3S)-homoisocitrate + NAD(+) = 2-oxoadipate + CO2 + NADH. It carries out the reaction D-threo-isocitrate + NAD(+) = 2-oxoglutarate + CO2 + NADH. It participates in amino-acid biosynthesis; L-lysine biosynthesis via AAA pathway; L-alpha-aminoadipate from 2-oxoglutarate: step 4/5. Its function is as follows. Catalyzes the NAD(+)-dependent oxidative decarboxylation of homoisocitrate to 2-oxoadipate (alpha-ketoadipate), a reaction involved in lysine biosynthesis through the alpha-aminoadipate pathway. In addition, has high activity with isocitrate, but is inactive with 3-isopropylmalate. The polypeptide is Isocitrate/homoisocitrate dehydrogenase (hicd) (Thermus thermophilus (strain ATCC BAA-163 / DSM 7039 / HB27)).